The chain runs to 396 residues: MAKAKFERTKPHVNIGTIGHVDHGKTTLTAAITKVLHDKYPELNESRAFDQIDNAPEERQRGITINISHVEYQTEKRHYAHVDAPGHADYIKNMITGAAQMDGAILVVAATDGPMPQTREHVLLARQVGVPYILVALNKADAVDDEELIELVEMEVRELLAAQDFDEDAPVVRVSALKALEGDEKWVKSVEELMDAVDESIPDPVRDTDRPFLMPVEDVFTITGRGTVVTGRVERGVVNVNEEVEIVGIRPGTTKTTVTGVEMFRKLLDQGQAGDNVGLLLRGIKREDVERGQVVVKPGTTTPHTEFDGQVYILSKDEGGRHTPFFNNYRPQFYFRTTDVTGVVTLPEGTEMVMPGDNTDISVKLIQPVAMDEGLRFAIREGGRTVGAGRVTKIHK.

Residues 10–205 (KPHVNIGTIG…AVDESIPDPV (196 aa)) form the tr-type G domain. The tract at residues 19–26 (GHVDHGKT) is G1. Residue 19-26 (GHVDHGKT) coordinates GTP. T26 lines the Mg(2+) pocket. Residues 62–66 (GITIN) are G2. The G3 stretch occupies residues 83-86 (DAPG). GTP-binding positions include 83 to 87 (DAPGH) and 138 to 141 (NKAD). The segment at 138 to 141 (NKAD) is G4. The G5 stretch occupies residues 175–177 (SAL).

This sequence belongs to the TRAFAC class translation factor GTPase superfamily. Classic translation factor GTPase family. EF-Tu/EF-1A subfamily. Monomer.

The protein localises to the cytoplasm. The enzyme catalyses GTP + H2O = GDP + phosphate + H(+). Its function is as follows. GTP hydrolase that promotes the GTP-dependent binding of aminoacyl-tRNA to the A-site of ribosomes during protein biosynthesis. The polypeptide is Elongation factor Tu (Mycobacterium sp. (strain JLS)).